A 410-amino-acid chain; its full sequence is Dihydrolipoyllysine-residue succinyltransferase component of 2-oxoglutarate dehydrogenase complex (410 aa).

Residues 3 to 81 (IINIFIPDLP…QVIGTLLKIG (79 aa)) form the Lipoyl-binding domain. Position 44 is an N6-lipoyllysine (Lys-44). The Peripheral subunit-binding (PSBD) domain occupies 112 to 150 (TYSPTVRRLISMHDLRDVDIIQGTGTKNRLTRKDILNYL). Residues His-381 and Asp-385 contribute to the active site.

Belongs to the 2-oxoacid dehydrogenase family. Forms a 24-polypeptide structural core with octahedral symmetry. Part of the 2-oxoglutarate dehydrogenase (OGDH) complex composed of E1 (2-oxoglutarate dehydrogenase), E2 (dihydrolipoamide succinyltransferase) and E3 (dihydrolipoamide dehydrogenase); the complex contains multiple copies of the three enzymatic components (E1, E2 and E3). (R)-lipoate is required as a cofactor.

The catalysed reaction is N(6)-[(R)-dihydrolipoyl]-L-lysyl-[protein] + succinyl-CoA = N(6)-[(R)-S(8)-succinyldihydrolipoyl]-L-lysyl-[protein] + CoA. Its pathway is amino-acid degradation; L-lysine degradation via saccharopine pathway; glutaryl-CoA from L-lysine: step 6/6. E2 component of the 2-oxoglutarate dehydrogenase (OGDH) complex which catalyzes the second step in the conversion of 2-oxoglutarate to succinyl-CoA and CO(2). The polypeptide is Dihydrolipoyllysine-residue succinyltransferase component of 2-oxoglutarate dehydrogenase complex (sucB) (Buchnera aphidicola subsp. Baizongia pistaciae (strain Bp)).